Reading from the N-terminus, the 1181-residue chain is 1-phosphatidylinositol 4,5-bisphosphate phosphodiesterase beta-2 (1181 aa).

One can recognise a PI-PLC X-box domain in the interval 312–463; it reads QDMTQPLNHY…LRGKILIKNK (152 aa). Residue His327 is part of the active site. Positions 328, 357, and 359 each coordinate Ca(2+). The active site involves His374. Glu408 contributes to the Ca(2+) binding site. Residues 465–534 form a disordered region; sequence NQFSGPASPS…EEIKKMQSDE (70 aa). Over residues 503-525 the composition is skewed to acidic residues; it reads TEVEEEEVVEEEEEEESGNLDEE. In terms of domain architecture, PI-PLC Y-box spans 547–663; sequence MSSLVNYIQP…GYLLKHEFMR (117 aa). In terms of domain architecture, C2 spans 666-791; the sequence is DKQFNPFSVD…CLRSESNMAL (126 aa). Positions 847 to 890 are disordered; sequence SGTPVASQSNGAPVSAGNGSTAPGTKATGEEATKEVTEPQTASL. A compositionally biased stretch (polar residues) spans 850 to 869; that stretch reads PVASQSNGAPVSAGNGSTAP. Residues 874-883 show a composition bias toward basic and acidic residues; that stretch reads TGEEATKEVT. A coiled-coil region spans residues 893–940; that stretch reads LRELKGVVKLQRRHEKELRELERRGARRWEELLQRGAAQLAELQTQAA. Phosphoserine is present on Ser950. 2 coiled-coil regions span residues 974–1026 and 1075–1141; these read PRVQ…AELK and HIQE…VRAY. Residues 1149–1181 are disordered; that stretch reads EAEDKPERSCEASEESCPQEPLVSKADTQESRL. The segment covering 1150-1159 has biased composition (basic and acidic residues); that stretch reads AEDKPERSCE.

As to quaternary structure, interacts with RAC1. Forms a complex composed of at least WDR26, a G-beta:gamma unit, and PLCB2. Requires Ca(2+) as cofactor.

It carries out the reaction a 1,2-diacyl-sn-glycero-3-phospho-(1D-myo-inositol-4,5-bisphosphate) + H2O = 1D-myo-inositol 1,4,5-trisphosphate + a 1,2-diacyl-sn-glycerol + H(+). The catalysed reaction is a 1,2-diacyl-sn-glycero-3-phospho-(1D-myo-inositol) + H2O = 1D-myo-inositol 1-phosphate + a 1,2-diacyl-sn-glycerol + H(+). Its function is as follows. The production of the second messenger molecules diacylglycerol (DAG) and inositol 1,4,5-trisphosphate (IP3) is mediated by activated phosphatidylinositol-specific phospholipase C enzymes. In neutrophils, participates in a phospholipase C-activating N-formyl peptide-activated GPCR (G protein-coupled receptor) signaling pathway by promoting RASGRP4 activation by DAG, to promote neutrophil functional responses. In Mus musculus (Mouse), this protein is 1-phosphatidylinositol 4,5-bisphosphate phosphodiesterase beta-2.